The following is a 590-amino-acid chain: 2-hydroxyacyl-CoA lyase (590 aa).

2-hydroxyisobutanoyl-CoA contacts are provided by residues G43, Q128, Q255, 273 to 274, and R362; that span reads RS. 410–412 provides a ligand contact to thiamine diphosphate; sequence GDL. R417 contributes to the 2-hydroxyisobutanoyl-CoA binding site. Residue G433 coordinates thiamine diphosphate. D460 lines the Mg(2+) pocket. Thiamine diphosphate is bound by residues 461-462 and 487-492; these read GA and NRAWNI. Residues N487 and A489 each contribute to the Mg(2+) site. E493 serves as the catalytic Proton acceptor. 561 to 564 is a binding site for 2-hydroxyisobutanoyl-CoA; it reads DSGK. The interval 566-590 is C-terminal lid; the sequence is LGFVPDYQALTPWNDAEVARRQEGI.

The protein belongs to the TPP enzyme family. A homotetramer formed by a dimer of dimers; active sites are located in the dimer interface. Mg(2+) is required as a cofactor. Requires thiamine diphosphate as cofactor.

It carries out the reaction 2-hydroxyisobutanoyl-CoA = formyl-CoA + acetone. With respect to regulation, activity is stimulated by thiamine diphosphate. A lyase that reversibly degrades 2-hydroxyisobutyryl-CoA (2-HIB-CoA) to acetone and formyl-CoA. Probably also cleaves 2-hydroxy-2-methylbutyryl-CoA to butanone and formyl-CoA. Does not act on 2-hydroxy-2-ethylbutyryl-CoA. A C-terminal lid closes the active site upon substrate binding, and with residues Leu-127 and Ile-492 restricts the size of the active site cavity so it can only use short-chain (C4 and C5) acyl substrates. Part of a pathway that allows cells to grow on 2-methylpropane-1,2-diol or 2-hydroxyisobutyric acid (2-HIBA) as a sole carbon source. This is 2-hydroxyacyl-CoA lyase from Actinomycetospora chiangmaiensis (strain DSM 45062 / JCM 15998 / CCTCC AA 205017 / NBRC 104400 / YIM 0006).